Reading from the N-terminus, the 124-residue chain is Small ribosomal subunit protein uS12cy (124 aa).

Belongs to the universal ribosomal protein uS12 family. In terms of assembly, part of the 30S ribosomal subunit.

The protein localises to the plastid. It localises to the chloroplast. Functionally, with S4 and S5 plays an important role in translational accuracy. Located at the interface of the 30S and 50S subunits. This Olimarabidopsis pumila (Dwarf rocket) protein is Small ribosomal subunit protein uS12cy (rps12-B).